The following is an 84-amino-acid chain: UPF0457 protein BT9727_3043 (84 aa).

The protein belongs to the UPF0457 family.

This Bacillus thuringiensis subsp. konkukian (strain 97-27) protein is UPF0457 protein BT9727_3043.